The following is a 299-amino-acid chain: Tetrahydromethanopterin S-methyltransferase subunit E (299 aa).

Transmembrane regions (helical) follow at residues 57–79, 89–111, 132–154, 164–183, 227–246, and 261–283; these read AISG…AWAL, AIIV…AFLG, HIGP…AYLA, LPLV…SSTG, FCSR…IIFL, and LVTK…AVIN.

Belongs to the MtrE family. The complex is composed of 8 subunits; MtrA, MtrB, MtrC, MtrD, MtrE, MtrF, MtrG and MtrH.

The protein localises to the cell membrane. The enzyme catalyses 5-methyl-5,6,7,8-tetrahydromethanopterin + coenzyme M + 2 Na(+)(in) = 5,6,7,8-tetrahydromethanopterin + methyl-coenzyme M + 2 Na(+)(out). It participates in one-carbon metabolism; methanogenesis from CO(2); methyl-coenzyme M from 5,10-methylene-5,6,7,8-tetrahydromethanopterin: step 2/2. Its function is as follows. Part of a complex that catalyzes the formation of methyl-coenzyme M and tetrahydromethanopterin from coenzyme M and methyl-tetrahydromethanopterin. This is an energy-conserving, sodium-ion translocating step. This chain is Tetrahydromethanopterin S-methyltransferase subunit E, found in Methanococcus maripaludis (strain DSM 14266 / JCM 13030 / NBRC 101832 / S2 / LL).